Reading from the N-terminus, the 951-residue chain is MTDSKYFTTNKKGEIFELKAELNNEKKEKRKEAVKKVIAAMTVGKDVSSLFPDVVNCMQTDNLELKKLVYLYLMNYAKSQPDMAIMAVNSFVKDCEDPNPLIRALAVRTMGCIRVDKITEYLCEPLRKCLKDEDPYVRKTAAVCVAKLHDINAQMVEDQGFLDSLRDLIADSNPMVVANAVAALSEISESHPNSNLLDLNPQNINKLLTALNECTEWGQIFILDCLSNYNPKDDREAQSICERVTPRLSHANSAVVLSAVKVLMKFLELLPKESDYYNMLLKKLAPPLVTLLSGEPEVQYVALRNINLIVQKRPEILKQEIKVFFVKYNDPIYVKLEKLDIMIRLASQANIAQVLAELKEYATEVDVDFVRKAVRAIGRCAIKVEQSAERCVSTLLDLIQTKVNYVVQEAIVVIRDIFRKYPNKYESIIATLCENLDSLDEPDARAAMIWIVGEYAERIDNADELLESFLEGFHDESTQVQLTLLTAIVKLFLKKPSETQELVQQVLSLATQDSDNPDLRDRGYIYWRLLSTDPVTAKEVVLSEKPLISEETDLIEPTLLDELICHIGSLASVYHKPPNAFVEGSHGIHRKHLPIHHGSTDAGDSPVGTTTATNLEQPQVIPSQGDLLGDLLNLDLGPPVNVPQVSSMQMGAVDLLGGGLDSLLGSDLGGGIGGSPAVGQSFIPSSVPATFAPSPTPAVVSSGLNDLFELSTGIGMAPGGYVAPKAVWLPAVKAKGLEISGTFTHRQGHIYMEMNFTNKALQHMTDFAIQFNKNSFGVIPSTPLAIHTPLMPNQSIDVSLPLNTLGPVMKMEPLNNLQVAVKNNIDVFYFSCLIPLNVLFVEDGKMERQVFLATWKDIPNENELQFQIKECHLNADTVSSKLQNNNVYTIAKRNVEGQDMLYQSLKLTNGIWILAELRIQPGNPNYTLSLKCRAPEVSQYIYQVYDSILKN.

Lys318 bears the N6-acetyllysine mark. Position 574 is a 3'-nitrotyrosine (Tyr574).

Belongs to the adaptor complexes large subunit family. Adaptor protein complex 1 (AP-1) is a heterotetramer composed of two large adaptins (gamma-type subunit AP1G1 and beta-type subunit AP1B1), a medium adaptin (mu-type subunit AP1M1 or AP1M2) and a small adaptin (sigma-type subunit AP1S1 or AP1S2 or AP1S3).

The protein resides in the cytoplasmic vesicle. It is found in the clathrin-coated vesicle membrane. It localises to the golgi apparatus. Its function is as follows. Subunit of clathrin-associated adaptor protein complex 1 that plays a role in protein sorting in the late-Golgi/trans-Golgi network (TGN) and/or endosomes. The AP complexes mediate both the recruitment of clathrin to membranes and the recognition of sorting signals within the cytosolic tails of transmembrane cargo molecules. The polypeptide is AP-1 complex subunit beta-1 (AP2B1) (Bos taurus (Bovine)).